The following is a 354-amino-acid chain: NADH-ubiquinone oxidoreductase chain 1 (354 aa).

8 consecutive transmembrane segments (helical) span residues 43 to 63, 108 to 128, 139 to 159, 180 to 200, 211 to 231, 264 to 284, 298 to 318, and 334 to 354; these read LFWS…LTLF, PALF…LWGC, FFWG…GVVL, VISY…VVGS, VSGC…FCVL, IFIA…VLFL, LISS…LIVL, and LIWC…LMII.

The protein belongs to the complex I subunit 1 family.

The protein localises to the mitochondrion inner membrane. It carries out the reaction a ubiquinone + NADH + 5 H(+)(in) = a ubiquinol + NAD(+) + 4 H(+)(out). Functionally, core subunit of the mitochondrial membrane respiratory chain NADH dehydrogenase (Complex I) that is believed to belong to the minimal assembly required for catalysis. Complex I functions in the transfer of electrons from NADH to the respiratory chain. The immediate electron acceptor for the enzyme is believed to be ubiquinone. This Pecten maximus (King scallop) protein is NADH-ubiquinone oxidoreductase chain 1 (ND1).